The chain runs to 67 residues: Light-harvesting protein B-870 alpha chain (67 aa).

At 1–12 (MWRIWRLFDPMR) the chain is on the cytoplasmic side. A helical membrane pass occupies residues 13–33 (AMVAQAVFLLGLAVLIHLMLL). His-29 lines the a bacteriochlorophyll pocket. Over 34–67 (GTNKYNWLDGAKKAPVATAVAPVPAEVTSLAQAK) the chain is Periplasmic.

The protein belongs to the antenna complex alpha subunit family. An alpha/beta heterodimer. The core complex is formed by different alpha and beta chains, binding bacteriochlorophyll molecules, and arranged most probably in tetrameric structures disposed around the reaction center. The non-pigmented gamma chains may constitute additional components.

The protein localises to the cell inner membrane. In terms of biological role, antenna complexes are light-harvesting systems, which transfer the excitation energy to the reaction centers. The chain is Light-harvesting protein B-870 alpha chain (pufA) from Rubrivivax gelatinosus (strain NBRC 100245 / IL144).